The primary structure comprises 357 residues: 4-hydroxy-3-methylbut-2-en-1-yl diphosphate synthase (flavodoxin) (357 aa).

Positions 264, 267, 299, and 306 each coordinate [4Fe-4S] cluster.

The protein belongs to the IspG family. Requires [4Fe-4S] cluster as cofactor.

It carries out the reaction (2E)-4-hydroxy-3-methylbut-2-enyl diphosphate + oxidized [flavodoxin] + H2O + 2 H(+) = 2-C-methyl-D-erythritol 2,4-cyclic diphosphate + reduced [flavodoxin]. Its pathway is isoprenoid biosynthesis; isopentenyl diphosphate biosynthesis via DXP pathway; isopentenyl diphosphate from 1-deoxy-D-xylulose 5-phosphate: step 5/6. Its function is as follows. Converts 2C-methyl-D-erythritol 2,4-cyclodiphosphate (ME-2,4cPP) into 1-hydroxy-2-methyl-2-(E)-butenyl 4-diphosphate. The sequence is that of 4-hydroxy-3-methylbut-2-en-1-yl diphosphate synthase (flavodoxin) from Campylobacter jejuni subsp. jejuni serotype O:6 (strain 81116 / NCTC 11828).